Consider the following 428-residue polypeptide: Homoserine dehydrogenase (428 aa).

Positions 10, 12, 13, 44, and 106 each coordinate NADPH. Val13 is an NAD(+) binding site. Residues Val13, Arg44, and Lys106 each coordinate NADP(+). Residues Glu130, Val133, Gly135, and Ile137 each coordinate Na(+). Gly188 and Glu191 together coordinate NADP(+). L-homoserine is bound by residues Glu191 and Asp202. The Proton donor role is filled by Lys206. An NADPH-binding site is contributed by Gly303. Residue Gly303 coordinates NAD(+). Position 303 (Gly303) interacts with NADP(+). The 75-residue stretch at 351–425 (YFSVETPDST…DFKLLNYFKV (75 aa)) folds into the ACT domain.

It belongs to the homoserine dehydrogenase family. A metal cation serves as cofactor.

It carries out the reaction L-homoserine + NADP(+) = L-aspartate 4-semialdehyde + NADPH + H(+). It catalyses the reaction L-homoserine + NAD(+) = L-aspartate 4-semialdehyde + NADH + H(+). It functions in the pathway amino-acid biosynthesis; L-methionine biosynthesis via de novo pathway; L-homoserine from L-aspartate: step 3/3. Its pathway is amino-acid biosynthesis; L-threonine biosynthesis; L-threonine from L-aspartate: step 3/5. Functionally, catalyzes the conversion of L-aspartate-beta-semialdehyde (L-Asa) to L-homoserine (L-Hse), the third step in the biosynthesis of threonine and methionine from aspartate. This Lactococcus lactis subsp. lactis (strain IL1403) (Streptococcus lactis) protein is Homoserine dehydrogenase (hom).